The following is a 399-amino-acid chain: Formate-dependent phosphoribosylglycinamide formyltransferase (399 aa).

N(1)-(5-phospho-beta-D-ribosyl)glycinamide contacts are provided by residues 22–23 (EL) and Glu-82. Residues Arg-115, Lys-157, 162-167 (SSGKGQ), 197-200 (EAVV), and Glu-205 contribute to the ATP site. Residues 120–315 (RLAAEELGLQ…EFELHARAIL (196 aa)) form the ATP-grasp domain. Mg(2+) contacts are provided by Glu-274 and Glu-286. Residues Asp-293, Lys-362, and 369–370 (RR) each bind N(1)-(5-phospho-beta-D-ribosyl)glycinamide.

It belongs to the PurK/PurT family. As to quaternary structure, homodimer.

It catalyses the reaction N(1)-(5-phospho-beta-D-ribosyl)glycinamide + formate + ATP = N(2)-formyl-N(1)-(5-phospho-beta-D-ribosyl)glycinamide + ADP + phosphate + H(+). It functions in the pathway purine metabolism; IMP biosynthesis via de novo pathway; N(2)-formyl-N(1)-(5-phospho-D-ribosyl)glycinamide from N(1)-(5-phospho-D-ribosyl)glycinamide (formate route): step 1/1. Its function is as follows. Involved in the de novo purine biosynthesis. Catalyzes the transfer of formate to 5-phospho-ribosyl-glycinamide (GAR), producing 5-phospho-ribosyl-N-formylglycinamide (FGAR). Formate is provided by PurU via hydrolysis of 10-formyl-tetrahydrofolate. In Thioalkalivibrio sulfidiphilus (strain HL-EbGR7), this protein is Formate-dependent phosphoribosylglycinamide formyltransferase.